Here is a 417-residue protein sequence, read N- to C-terminus: Actin-related protein 10 (417 aa).

Belongs to the actin family. In terms of assembly, subunit of dynactin, a multiprotein complex part of a tripartite complex with dynein and a adapter, such as BICDL1, BICD2 or HOOK3. The dynactin complex is built around ACTR1A/ACTB filament and consists of an actin-related filament composed of a shoulder domain, a pointed end and a barbed end. Its length is defined by its flexible shoulder domain. The soulder is composed of 2 DCTN1 subunits, 4 DCTN2 and 2 DCTN3. The 4 DCNT2 (via N-terminus) bind the ACTR1A filament and act as molecular rulers to determine the length. The pointed end is important for binding dynein-dynactin cargo adapters. Consists of 4 subunits: ACTR10, DCNT4, DCTN5 and DCTN6. The barbed end is composed of a CAPZA1:CAPZB heterodimers, which binds ACTR1A/ACTB filament and dynactin and stabilizes dynactin.

It is found in the cytoplasm. It localises to the cytoskeleton. Its function is as follows. Part of the dynactin complex that activates the molecular motor dynein for ultra-processive transport along microtubules. In Mus musculus (Mouse), this protein is Actin-related protein 10 (Actr10).